Here is a 72-residue protein sequence, read N- to C-terminus: NAD(P)H-quinone oxidoreductase subunit O (72 aa).

It belongs to the complex I NdhO subunit family. As to quaternary structure, NDH-1 can be composed of about 15 different subunits; different subcomplexes with different compositions have been identified which probably have different functions.

Its subcellular location is the cellular thylakoid membrane. It catalyses the reaction a plastoquinone + NADH + (n+1) H(+)(in) = a plastoquinol + NAD(+) + n H(+)(out). The enzyme catalyses a plastoquinone + NADPH + (n+1) H(+)(in) = a plastoquinol + NADP(+) + n H(+)(out). In terms of biological role, NDH-1 shuttles electrons from an unknown electron donor, via FMN and iron-sulfur (Fe-S) centers, to quinones in the respiratory and/or the photosynthetic chain. The immediate electron acceptor for the enzyme in this species is believed to be plastoquinone. Couples the redox reaction to proton translocation, and thus conserves the redox energy in a proton gradient. Cyanobacterial NDH-1 also plays a role in inorganic carbon-concentration. This Synechococcus elongatus (strain ATCC 33912 / PCC 7942 / FACHB-805) (Anacystis nidulans R2) protein is NAD(P)H-quinone oxidoreductase subunit O.